A 1437-amino-acid polypeptide reads, in one-letter code: IQ domain-containing protein N (1437 aa).

In terms of domain architecture, IQ 1 spans S84–A112. Disordered regions lie at residues T332–N353, S416–P440, and S848–R878. Positions T422–P440 are enriched in low complexity. Positions A861 to R878 are enriched in polar residues. IQ domains lie at Q1190–T1216, I1217–T1239, I1240–V1258, Q1361–K1389, and M1390–G1413.

As to quaternary structure, interacts with calmodulin. As to expression, expressed in testis, in elongating spermatids (at protein level).

Essential for spermiogenesis and fertilization. May be required for manchette assembly in elongating spermatids. This is IQ domain-containing protein N (Iqcn) from Mus musculus (Mouse).